A 59-amino-acid polypeptide reads, in one-letter code: Zinc finger protein HVO_2753 (59 aa).

4 consecutive short sequence motifs (c(P)XCG motif) follow at residues Cys-12–Gly-16, Cys-29–Gly-33, Cys-39–Arg-43, and Cys-51–Gly-55. Cys-29 and Cys-32 together coordinate Zn(2+). Positions 51 and 54 each coordinate Zn(2+).

In terms of assembly, monomer in solution.

In terms of biological role, zinc-binding protein that binds only one zinc ion. Is required for swarming and biofilm formation. This Haloferax volcanii (strain ATCC 29605 / DSM 3757 / JCM 8879 / NBRC 14742 / NCIMB 2012 / VKM B-1768 / DS2) (Halobacterium volcanii) protein is Zinc finger protein HVO_2753.